We begin with the raw amino-acid sequence, 138 residues long: Translation initiation factor IF-1, chloroplastic (138 aa).

A chloroplast-targeting transit peptide spans 1–53 (MFTSLHTPILHPRYCHHPTPSCTQFSPLALPPFHRTLSFLAPPPLLPAAPALS). The S1-like domain maps to 58–133 (AKPDKSGEQK…SKGRIVYRLR (76 aa)).

This sequence belongs to the IF-1 family. In terms of assembly, component of the 30S ribosomal translation pre-initiation complex which assembles on the 30S ribosome in the order IF-2 and IF-3, IF-1 and N-formylmethionyl-tRNA(fMet); mRNA recruitment can occur at any time during PIC assembly.

It localises to the plastid. The protein resides in the chloroplast. Its function is as follows. One of the essential components for the initiation of protein synthesis. Stabilizes the binding of IF-2 and IF-3 on the 30S subunit to which N-formylmethionyl-tRNA(fMet) subsequently binds. Helps modulate mRNA selection, yielding the 30S pre-initiation complex (PIC). Upon addition of the 50S ribosomal subunit IF-1, IF-2 and IF-3 are released leaving the mature 70S translation initiation complex. The protein is Translation initiation factor IF-1, chloroplastic (infA) of Glycine max (Soybean).